The chain runs to 337 residues: Cytoskeleton protein RodZ (337 aa).

At 1–111 (MNTEATHDQN…LGKRRKKRDG (111 aa)) the chain is on the cytoplasmic side. An HTH cro/C1-type domain is found at 19 to 71 (LRNAREQLGLSQQAVAERLCLKVSTVRDIEEDKAPADLASTFLRGYIRSYARL). The H-T-H motif DNA-binding region spans 30 to 49 (QQAVAERLCLKVSTVRDIEE). The chain crosses the membrane as a helical; Signal-anchor for type II membrane protein span at residues 112–132 (WLMTFTWLVLFVVIGLSGAWW). At 133–337 (WQDHKAQQEE…TLNAEQSPAQ (205 aa)) the chain is on the periplasmic side. Residues 145–167 (TMADQSSAELSSNSEQGQSVPLN) show a composition bias toward polar residues. A disordered region spans residues 145–236 (TMADQSSAEL…TAATTPDGAA (92 aa)). A compositionally biased stretch (low complexity) spans 168 to 207 (TSTTTDPATTSTPPASVDTTATNTQTPAVTAPAPAVDPQQ). Over residues 208-218 (NAVVSPSQANV) the composition is skewed to polar residues. The segment covering 219–236 (DTAATPAPTAATTPDGAA) has biased composition (low complexity).

This sequence belongs to the RodZ family.

It is found in the cell inner membrane. Its function is as follows. Cytoskeletal protein that is involved in cell-shape control through regulation of the length of the long axis. The protein is Cytoskeleton protein RodZ of Escherichia coli O139:H28 (strain E24377A / ETEC).